We begin with the raw amino-acid sequence, 32 residues long: Cytochrome b6-f complex subunit 7 (32 aa).

A helical transmembrane segment spans residues 9-27 (AAVFWVLIPVGLLGGAILL).

It belongs to the PetM family. As to quaternary structure, the 4 large subunits of the cytochrome b6-f complex are cytochrome b6, subunit IV (17 kDa polypeptide, PetD), cytochrome f and the Rieske protein, while the 4 small subunits are PetG, PetL, PetM and PetN. The complex functions as a dimer.

Its subcellular location is the cellular thylakoid membrane. Its function is as follows. Component of the cytochrome b6-f complex, which mediates electron transfer between photosystem II (PSII) and photosystem I (PSI), cyclic electron flow around PSI, and state transitions. This chain is Cytochrome b6-f complex subunit 7, found in Prochlorococcus marinus (strain MIT 9211).